Here is a 503-residue protein sequence, read N- to C-terminus: ATP synthase subunit alpha (503 aa).

169 to 176 (GDRKTGKT) is a binding site for ATP.

Belongs to the ATPase alpha/beta chains family. As to quaternary structure, F-type ATPases have 2 components, CF(1) - the catalytic core - and CF(0) - the membrane proton channel. CF(1) has five subunits: alpha(3), beta(3), gamma(1), delta(1), epsilon(1). CF(0) has three main subunits: a(1), b(2) and c(9-12). The alpha and beta chains form an alternating ring which encloses part of the gamma chain. CF(1) is attached to CF(0) by a central stalk formed by the gamma and epsilon chains, while a peripheral stalk is formed by the delta and b chains.

It localises to the cell membrane. It carries out the reaction ATP + H2O + 4 H(+)(in) = ADP + phosphate + 5 H(+)(out). Produces ATP from ADP in the presence of a proton gradient across the membrane. The alpha chain is a regulatory subunit. The protein is ATP synthase subunit alpha of Lactobacillus delbrueckii subsp. bulgaricus (strain ATCC 11842 / DSM 20081 / BCRC 10696 / JCM 1002 / NBRC 13953 / NCIMB 11778 / NCTC 12712 / WDCM 00102 / Lb 14).